The following is a 301-amino-acid chain: Nitric oxide synthase-interacting protein (301 aa).

At Ser36 the chain carries Phosphoserine. Positions Asp55–Leu75 are U-box-like. Residues Lys78–Glu101 carry the Nuclear localization signal motif. Ser107 carries the phosphoserine modification. The tract at residues Lys132–Lys157 is disordered.

The protein belongs to the NOSIP family. As to quaternary structure, interacts with NOS1 and NOS3. Interacts with PP2A holoenzyme, containing PPP2CA, PPP2CB, PPP2R1A and PPP2R2A subunits. Expressed in heart, brain and lung. Present in endothelial cells (at protein level).

The protein localises to the cytoplasm. It is found in the nucleus. The enzyme catalyses S-ubiquitinyl-[E2 ubiquitin-conjugating enzyme]-L-cysteine + [acceptor protein]-L-lysine = [E2 ubiquitin-conjugating enzyme]-L-cysteine + N(6)-ubiquitinyl-[acceptor protein]-L-lysine.. In terms of biological role, E3 ubiquitin-protein ligase that is essential for proper development of the forebrain, the eye, and the face. Catalyzes monoubiquitination of serine/threonine-protein phosphatase 2A (PP2A) catalytic subunit PPP2CA/PPP2CB. Negatively regulates nitric oxide production by inducing NOS1 and NOS3 translocation to actin cytoskeleton and inhibiting their enzymatic activity. The polypeptide is Nitric oxide synthase-interacting protein (NOSIP) (Homo sapiens (Human)).